The sequence spans 134 residues: Large ribosomal subunit protein uL22 (134 aa).

It belongs to the universal ribosomal protein uL22 family. Part of the 50S ribosomal subunit.

In terms of biological role, this protein binds specifically to 23S rRNA; its binding is stimulated by other ribosomal proteins, e.g. L4, L17, and L20. It is important during the early stages of 50S assembly. It makes multiple contacts with different domains of the 23S rRNA in the assembled 50S subunit and ribosome. Its function is as follows. The globular domain of the protein is located near the polypeptide exit tunnel on the outside of the subunit, while an extended beta-hairpin is found that lines the wall of the exit tunnel in the center of the 70S ribosome. The sequence is that of Large ribosomal subunit protein uL22 from Karelsulcia muelleri (strain GWSS) (Sulcia muelleri).